A 586-amino-acid polypeptide reads, in one-letter code: Acyl-coenzyme A synthetase ACSM3, mitochondrial (586 aa).

The N-terminal 27 residues, 1 to 27 (MLACVTMKMLRHAKCFQRLAIFGSVRA), are a transit peptide targeting the mitochondrion. Residues lysine 73 and lysine 106 each carry the N6-succinyllysine modification. Lysine 157 bears the N6-acetyllysine mark. Residues 235–243 (TSGTSGYPK), 374–379 (EGYGQT), aspartate 461, arginine 476, and lysine 572 each bind ATP.

The protein belongs to the ATP-dependent AMP-binding enzyme family. It depends on Mg(2+) as a cofactor. Requires Mn(2+) as cofactor.

It localises to the mitochondrion. The protein localises to the mitochondrion matrix. The enzyme catalyses a medium-chain fatty acid + ATP + CoA = a medium-chain fatty acyl-CoA + AMP + diphosphate. It carries out the reaction propanoate + ATP + CoA = propanoyl-CoA + AMP + diphosphate. It catalyses the reaction butanoate + ATP + CoA = butanoyl-CoA + AMP + diphosphate. The catalysed reaction is 2-methylpropanoate + ATP + CoA = 2-methylpropanoyl-CoA + AMP + diphosphate. The enzyme catalyses 2-methylbutanoate + ATP + CoA = 2-methylbutanoyl-CoA + AMP + diphosphate. It carries out the reaction octanoate + ATP + CoA = octanoyl-CoA + AMP + diphosphate. Functionally, catalyzes the activation of fatty acids by CoA to produce an acyl-CoA, the first step in fatty acid metabolism. Capable of activating medium-chain fatty acids with a preference for isobutyrate among fatty acids with 2-6 carbon atoms. The chain is Acyl-coenzyme A synthetase ACSM3, mitochondrial (ACSM3) from Pongo abelii (Sumatran orangutan).